The primary structure comprises 356 residues: sn-glycerol-3-phosphate import ATP-binding protein UgpC (356 aa).

An ABC transporter domain is found at 4-235 (LKLQAVTKSW…PASLFVASFI (232 aa)). Residue 37 to 44 (GPSGCGKS) coordinates ATP.

The protein belongs to the ABC transporter superfamily. sn-glycerol-3-phosphate importer (TC 3.A.1.1.3) family. In terms of assembly, the complex is composed of two ATP-binding proteins (UgpC), two transmembrane proteins (UgpA and UgpE) and a solute-binding protein (UgpB).

Its subcellular location is the cell inner membrane. The enzyme catalyses sn-glycerol 3-phosphate(out) + ATP + H2O = sn-glycerol 3-phosphate(in) + ADP + phosphate + H(+). In terms of biological role, part of the ABC transporter complex UgpBAEC involved in sn-glycerol-3-phosphate (G3P) import. Responsible for energy coupling to the transport system. This is sn-glycerol-3-phosphate import ATP-binding protein UgpC from Shigella sonnei (strain Ss046).